The primary structure comprises 572 residues: Proline--tRNA ligase (572 aa).

Belongs to the class-II aminoacyl-tRNA synthetase family. ProS type 1 subfamily. Homodimer.

The protein resides in the cytoplasm. The enzyme catalyses tRNA(Pro) + L-proline + ATP = L-prolyl-tRNA(Pro) + AMP + diphosphate. In terms of biological role, catalyzes the attachment of proline to tRNA(Pro) in a two-step reaction: proline is first activated by ATP to form Pro-AMP and then transferred to the acceptor end of tRNA(Pro). As ProRS can inadvertently accommodate and process non-cognate amino acids such as alanine and cysteine, to avoid such errors it has two additional distinct editing activities against alanine. One activity is designated as 'pretransfer' editing and involves the tRNA(Pro)-independent hydrolysis of activated Ala-AMP. The other activity is designated 'posttransfer' editing and involves deacylation of mischarged Ala-tRNA(Pro). The misacylated Cys-tRNA(Pro) is not edited by ProRS. The protein is Proline--tRNA ligase of Hydrogenovibrio crunogenus (strain DSM 25203 / XCL-2) (Thiomicrospira crunogena).